A 308-amino-acid chain; its full sequence is Ribosomal RNA small subunit methyltransferase H (308 aa).

Residues 32–34 (AGH), aspartate 51, phenylalanine 78, aspartate 99, and glutamine 106 each bind S-adenosyl-L-methionine.

Belongs to the methyltransferase superfamily. RsmH family.

The protein localises to the cytoplasm. It carries out the reaction cytidine(1402) in 16S rRNA + S-adenosyl-L-methionine = N(4)-methylcytidine(1402) in 16S rRNA + S-adenosyl-L-homocysteine + H(+). Functionally, specifically methylates the N4 position of cytidine in position 1402 (C1402) of 16S rRNA. The chain is Ribosomal RNA small subunit methyltransferase H from Mesoplasma florum (strain ATCC 33453 / NBRC 100688 / NCTC 11704 / L1) (Acholeplasma florum).